The following is a 183-amino-acid chain: Holliday junction branch migration complex subunit RuvA (183 aa).

The interval 1–63 (MIVGLIGVVE…EDAHLLYGFL (63 aa)) is domain I. Residues 64–139 (EEGEKILFER…FFIQDENRPA (76 aa)) form a domain II region. A139 is a region of interest (flexible linker). The domain III stretch occupies residues 139–183 (ARNEVFLALESLGFKSAEINQVLKTLKPNLSIEAAIKEALQQLRS).

Belongs to the RuvA family. As to quaternary structure, homotetramer. Forms an RuvA(8)-RuvB(12)-Holliday junction (HJ) complex. HJ DNA is sandwiched between 2 RuvA tetramers; dsDNA enters through RuvA and exits via RuvB. An RuvB hexamer assembles on each DNA strand where it exits the tetramer. Each RuvB hexamer is contacted by two RuvA subunits (via domain III) on 2 adjacent RuvB subunits; this complex drives branch migration. In the full resolvosome a probable DNA-RuvA(4)-RuvB(12)-RuvC(2) complex forms which resolves the HJ.

Its subcellular location is the cytoplasm. Its function is as follows. The RuvA-RuvB-RuvC complex processes Holliday junction (HJ) DNA during genetic recombination and DNA repair, while the RuvA-RuvB complex plays an important role in the rescue of blocked DNA replication forks via replication fork reversal (RFR). RuvA specifically binds to HJ cruciform DNA, conferring on it an open structure. The RuvB hexamer acts as an ATP-dependent pump, pulling dsDNA into and through the RuvAB complex. HJ branch migration allows RuvC to scan DNA until it finds its consensus sequence, where it cleaves and resolves the cruciform DNA. This Helicobacter pylori (strain ATCC 700392 / 26695) (Campylobacter pylori) protein is Holliday junction branch migration complex subunit RuvA.